The chain runs to 88 residues: Small ribosomal subunit protein bS16 (88 aa).

This sequence belongs to the bacterial ribosomal protein bS16 family.

The polypeptide is Small ribosomal subunit protein bS16 (Baumannia cicadellinicola subsp. Homalodisca coagulata).